The primary structure comprises 2226 residues: Rotatin (2226 aa).

Positions 295–346 (EARGPYHSPNPSPGSSSSRPSVVGRTGQRPRGDGQDWDAVSSSGSSSHTHVN) are disordered. Residues 307-319 (PGSSSSRPSVVGR) show a composition bias toward low complexity. At serine 311 the chain carries Phosphoserine. Lysine 813 is modified (N6-acetyllysine).

Belongs to the rotatin family. As to quaternary structure, interacts with PPP1R35; this interaction allows the mutual recruitment to the centriole.

The protein localises to the cytoplasm. The protein resides in the cytoskeleton. It localises to the cilium basal body. Involved in the genetic cascade that governs left-right specification. Required for correct asymmetric expression of NODAL, LEFTY and PITX2. The protein is Rotatin of Mus musculus (Mouse).